The chain runs to 301 residues: Light-independent protochlorophyllide reductase iron-sulfur ATP-binding protein (301 aa).

The segment covering 1-13 has biased composition (low complexity); it reads MNVTLRPPLAAAP. A disordered region spans residues 1–22; the sequence is MNVTLRPPLAAAPRRPDGAGSV. ATP contacts are provided by residues 45 to 50 and Lys-74; that span reads GIGKST. Mg(2+) is bound at residue Ser-49. Positions 130 and 164 each coordinate [4Fe-4S] cluster. Residues 215–216 and 239–241 each bind ATP; these read NR and PDL.

The protein belongs to the NifH/BchL/ChlL family. In terms of assembly, homodimer. Protochlorophyllide reductase is composed of three subunits; BchL, BchN and BchB. [4Fe-4S] cluster is required as a cofactor.

It carries out the reaction chlorophyllide a + oxidized 2[4Fe-4S]-[ferredoxin] + 2 ADP + 2 phosphate = protochlorophyllide a + reduced 2[4Fe-4S]-[ferredoxin] + 2 ATP + 2 H2O. It participates in porphyrin-containing compound metabolism; bacteriochlorophyll biosynthesis (light-independent). Its function is as follows. Component of the dark-operative protochlorophyllide reductase (DPOR) that uses Mg-ATP and reduced ferredoxin to reduce ring D of protochlorophyllide (Pchlide) to form chlorophyllide a (Chlide). This reaction is light-independent. The L component serves as a unique electron donor to the NB-component of the complex, and binds Mg-ATP. The protein is Light-independent protochlorophyllide reductase iron-sulfur ATP-binding protein of Bradyrhizobium sp. (strain ORS 278).